We begin with the raw amino-acid sequence, 169 residues long: Cell division inhibitor SulA (169 aa).

The ftsZ binding stretch occupies residues 106–112; the sequence is ALRTGNY. Residues 162–169 form a lon protease binding region; it reads KIHSNLYH.

The protein belongs to the SulA family. As to quaternary structure, interacts with FtsZ. In terms of processing, is rapidly cleaved and degraded by the Lon protease once DNA damage is repaired.

Functionally, component of the SOS system and an inhibitor of cell division. Accumulation of SulA causes rapid cessation of cell division and the appearance of long, non-septate filaments. In the presence of GTP, binds a polymerization-competent form of FtsZ in a 1:1 ratio, thus inhibiting FtsZ polymerization and therefore preventing it from participating in the assembly of the Z ring. This mechanism prevents the premature segregation of damaged DNA to daughter cells during cell division. The protein is Cell division inhibitor SulA of Salmonella arizonae (strain ATCC BAA-731 / CDC346-86 / RSK2980).